We begin with the raw amino-acid sequence, 597 residues long: Arginine--tRNA ligase (597 aa).

The 'HIGH' region signature appears at 125–135; sequence PNTNKPLHLGH.

Belongs to the class-I aminoacyl-tRNA synthetase family. In terms of assembly, monomer.

It is found in the cytoplasm. The enzyme catalyses tRNA(Arg) + L-arginine + ATP = L-arginyl-tRNA(Arg) + AMP + diphosphate. The protein is Arginine--tRNA ligase of Parabacteroides distasonis (strain ATCC 8503 / DSM 20701 / CIP 104284 / JCM 5825 / NCTC 11152).